We begin with the raw amino-acid sequence, 432 residues long: NADH-quinone oxidoreductase subunit D (432 aa).

This sequence belongs to the complex I 49 kDa subunit family. As to quaternary structure, NDH-1 is composed of 14 different subunits. Subunits NuoB, C, D, E, F, and G constitute the peripheral sector of the complex.

It is found in the cell membrane. It carries out the reaction a quinone + NADH + 5 H(+)(in) = a quinol + NAD(+) + 4 H(+)(out). Functionally, NDH-1 shuttles electrons from NADH, via FMN and iron-sulfur (Fe-S) centers, to quinones in the respiratory chain. The immediate electron acceptor for the enzyme in this species is believed to be a menaquinone. Couples the redox reaction to proton translocation (for every two electrons transferred, four hydrogen ions are translocated across the cytoplasmic membrane), and thus conserves the redox energy in a proton gradient. This is NADH-quinone oxidoreductase subunit D from Mycobacteroides abscessus (strain ATCC 19977 / DSM 44196 / CCUG 20993 / CIP 104536 / JCM 13569 / NCTC 13031 / TMC 1543 / L948) (Mycobacterium abscessus).